A 154-amino-acid chain; its full sequence is Endoribonuclease YbeY (154 aa).

Zn(2+) is bound by residues H113, H117, and H123.

The protein belongs to the endoribonuclease YbeY family. Zn(2+) serves as cofactor.

It localises to the cytoplasm. Functionally, single strand-specific metallo-endoribonuclease involved in late-stage 70S ribosome quality control and in maturation of the 3' terminus of the 16S rRNA. This is Endoribonuclease YbeY from Ehrlichia canis (strain Jake).